The chain runs to 397 residues: Probable protein phosphatase 2C 74 (397 aa).

One can recognise a PPM-type phosphatase domain in the interval G133 to L391. The Mn(2+) site is built by D170, G171, D343, and D382.

This sequence belongs to the PP2C family. Mg(2+) is required as a cofactor. Requires Mn(2+) as cofactor.

The enzyme catalyses O-phospho-L-seryl-[protein] + H2O = L-seryl-[protein] + phosphate. It catalyses the reaction O-phospho-L-threonyl-[protein] + H2O = L-threonyl-[protein] + phosphate. The polypeptide is Probable protein phosphatase 2C 74 (Oryza sativa subsp. japonica (Rice)).